A 101-amino-acid polypeptide reads, in one-letter code: Interleukin-8 (101 aa).

An N-terminal signal peptide occupies residues 1–22 (MTSKLAVALLAAFLLSAALCEA). At Arg-27 the chain carries Citrulline. Intrachain disulfides connect Cys-34–Cys-61 and Cys-36–Cys-77.

Belongs to the intercrine alpha (chemokine CxC) family. In terms of assembly, homodimer. Interacts with TNFAIP6 (via Link domain); this interaction interferes with chemokine binding to glycosaminoglycans. Post-translationally, citrullination at Arg-27 prevents proteolysis, and dampens tissue inflammation, it also enhances leukocytosis, possibly through impaired chemokine clearance from the blood circulation.

The protein localises to the secreted. Its function is as follows. Chemotactic factor that mediates inflammatory response by attracting neutrophils, basophils, and T-cells to clear pathogens and protect the host from infection. Also plays an important role in neutrophil activation. Released in response to an inflammatory stimulus, exerts its effect by binding to the G-protein-coupled receptors CXCR1 and CXCR2, primarily found in neutrophils, monocytes and endothelial cells. G-protein heterotrimer (alpha, beta, gamma subunits) constitutively binds to CXCR1/CXCR2 receptor and activation by IL8 leads to beta and gamma subunits release from Galpha (GNAI2 in neutrophils) and activation of several downstream signaling pathways including PI3K and MAPK pathways. This chain is Interleukin-8 (CXCL8), found in Ovis aries (Sheep).